The primary structure comprises 181 residues: uncharacterized protein (181 aa).

This is an uncharacterized protein from Homo sapiens (Human).